A 279-amino-acid chain; its full sequence is MSAEEPKSYPVPYRSVLQEKFEPGQTLIVKGSTIDESQRFTINLHSKTADFSGNDVPLHVSVRFDEGKIVLNSFSNGEWGKEERKSNPIKKGDSFDIRIRAHDDRFQIIVDHKEFKDYEHRLPLSSISHLSIDGDLYLNHVHWGGKYYPVPYESGLANGLPVGKSLLVFGTVEKKAKRFHVNLLRKNGDISFHFNPRFDEKHVIRNSLAANEWGNEEREGKNPFEKGVGFDLVIQNEEYAFQVFVNGERYISFAHRADPHDIAGLQISGDIELSGIQIQ.

Galectin domains are found at residues 13 to 144 (YRSV…VHWG) and 152 to 279 (YESG…IQIQ). 213 to 219 (WGNEERE) lines the a beta-D-galactoside pocket.

Post-translationally, the N-terminus is blocked.

Functionally, binds galactose. In Caenorhabditis elegans, this protein is 32 kDa beta-galactoside-binding lectin (lec-1).